Consider the following 101-residue polypeptide: Small ribosomal subunit protein uS10 (101 aa).

The protein belongs to the universal ribosomal protein uS10 family. Part of the 30S ribosomal subunit.

Functionally, involved in the binding of tRNA to the ribosomes. This is Small ribosomal subunit protein uS10 from Flavobacterium psychrophilum (strain ATCC 49511 / DSM 21280 / CIP 103535 / JIP02/86).